The chain runs to 440 residues: Phosphoglycerate kinase, glycosomal (440 aa).

(2R)-3-phosphoglycerate contacts are provided by Val23, Asp24, Phe25, Asn26, Arg39, Ser61, His62, Gly64, Arg65, Arg135, His171, and Arg172. Residue Gly217 coordinates CDP. Ala218 is a binding site for ADP. AMP contacts are provided by Ala218 and Lys219. An ATP-binding site is contributed by Ala218. Ala218 is a Mg(2+) binding site. Lys219 contacts (2R)-3-phosphoglycerate. Asp222 serves as a coordination point for CDP. Residue Asp222 participates in Mg(2+) binding. ADP is bound by residues Lys223 and Gly241. Lys223 serves as a coordination point for AMP. CDP is bound at residue Gly241. Positions 242 and 314 each coordinate AMP. Positions 242 and 314 each coordinate ATP. Residues Ala314 and Asn338 each contribute to the ADP site. CDP is bound by residues Gly339 and Phe344. ADP is bound by residues Phe344, Glu345, Asp377, and Ser378. Glu345 serves as a coordination point for AMP. 2 residues coordinate ATP: Asp377 and Ser378. Asp377 lines the Mg(2+) pocket.

The protein belongs to the phosphoglycerate kinase family. In terms of assembly, monomer. It depends on Mg(2+) as a cofactor.

It is found in the glycosome. The catalysed reaction is (2R)-3-phosphoglycerate + ATP = (2R)-3-phospho-glyceroyl phosphate + ADP. The protein operates within carbohydrate degradation; glycolysis; pyruvate from D-glyceraldehyde 3-phosphate: step 2/5. The protein is Phosphoglycerate kinase, glycosomal of Trypanosoma brucei brucei.